Here is a 164-residue protein sequence, read N- to C-terminus: GTP-dependent dephospho-CoA kinase (164 aa).

GTP contacts are provided by Asp-40, Val-41, Val-42, Asp-59, Lys-61, and Glu-113.

It belongs to the GTP-dependent DPCK family.

The catalysed reaction is 3'-dephospho-CoA + GTP = GDP + CoA + H(+). It functions in the pathway cofactor biosynthesis; coenzyme A biosynthesis. Functionally, catalyzes the GTP-dependent phosphorylation of the 3'-hydroxyl group of dephosphocoenzyme A to form coenzyme A (CoA). This chain is GTP-dependent dephospho-CoA kinase, found in Sulfolobus acidocaldarius (strain ATCC 33909 / DSM 639 / JCM 8929 / NBRC 15157 / NCIMB 11770).